A 489-amino-acid polypeptide reads, in one-letter code: Rhamnulokinase (489 aa).

Position 13–17 (13–17) interacts with ATP; sequence ASSGR. The cysteines at positions 68 and 222 are disulfide-linked. Substrate-binding positions include Gly83 and 236 to 238; that span reads HDT. Asp237 (proton acceptor) is an active-site residue. Residue Thr259 participates in ATP binding. A substrate-binding site is contributed by Asn296. Residue Gln304 participates in ATP binding. A disulfide bond links Cys353 and Cys370. Gly402 provides a ligand contact to ATP. Cys413 and Cys417 are oxidised to a cystine.

Belongs to the rhamnulokinase family. Monomer. The cofactor is Mg(2+).

It catalyses the reaction L-rhamnulose + ATP = L-rhamnulose 1-phosphate + ADP + H(+). It functions in the pathway carbohydrate degradation; L-rhamnose degradation; glycerone phosphate from L-rhamnose: step 2/3. Functionally, involved in the catabolism of L-rhamnose (6-deoxy-L-mannose). Catalyzes the transfer of the gamma-phosphate group from ATP to the 1-hydroxyl group of L-rhamnulose to yield L-rhamnulose 1-phosphate. The sequence is that of Rhamnulokinase from Escherichia coli O9:H4 (strain HS).